Consider the following 302-residue polypeptide: Oxygen-dependent coproporphyrinogen-III oxidase (302 aa).

Ser94 provides a ligand contact to substrate. Positions 98 and 108 each coordinate a divalent metal cation. His108 (proton donor) is an active-site residue. A substrate-binding site is contributed by 110–112 (NVR). A divalent metal cation is bound by residues His147 and His177. The interval 242 to 277 (YVEFNLVYDRGTIFGLQSGGRTESILMSLPPLVRWD) is important for dimerization. 260–262 (GGR) contacts substrate.

This sequence belongs to the aerobic coproporphyrinogen-III oxidase family. As to quaternary structure, homodimer. The cofactor is a divalent metal cation.

It is found in the cytoplasm. The enzyme catalyses coproporphyrinogen III + O2 + 2 H(+) = protoporphyrinogen IX + 2 CO2 + 2 H2O. It participates in porphyrin-containing compound metabolism; protoporphyrin-IX biosynthesis; protoporphyrinogen-IX from coproporphyrinogen-III (O2 route): step 1/1. Its function is as follows. Involved in the heme biosynthesis. Catalyzes the aerobic oxidative decarboxylation of propionate groups of rings A and B of coproporphyrinogen-III to yield the vinyl groups in protoporphyrinogen-IX. The protein is Oxygen-dependent coproporphyrinogen-III oxidase of Alcanivorax borkumensis (strain ATCC 700651 / DSM 11573 / NCIMB 13689 / SK2).